The primary structure comprises 260 residues: GTP cyclohydrolase FolE2 (260 aa).

Belongs to the GTP cyclohydrolase IV family.

The catalysed reaction is GTP + H2O = 7,8-dihydroneopterin 3'-triphosphate + formate + H(+). Its pathway is cofactor biosynthesis; 7,8-dihydroneopterin triphosphate biosynthesis; 7,8-dihydroneopterin triphosphate from GTP: step 1/1. In terms of biological role, converts GTP to 7,8-dihydroneopterin triphosphate. This Desulfovibrio desulfuricans (strain ATCC 27774 / DSM 6949 / MB) protein is GTP cyclohydrolase FolE2.